Consider the following 523-residue polypeptide: Probable E3 ubiquitin-protein ligase ZFP1 (523 aa).

Basic and acidic residues predominate over residues 18–28; it reads EQGHSHIHSES. The tract at residues 18–43 is disordered; the sequence is EQGHSHIHSESFNRTGNDSSDQGAQH. Residues 29–40 show a composition bias toward polar residues; it reads FNRTGNDSSDQG. The segment at 471–512 adopts an RING-type; atypical zinc-finger fold; it reads CIICQEEYQVKECIGTLDCGHRYHEDCIKQWLMVKNLCPICK.

The protein belongs to the RING-type zinc finger family. As to quaternary structure, interacts with DJA6.

The enzyme catalyses S-ubiquitinyl-[E2 ubiquitin-conjugating enzyme]-L-cysteine + [acceptor protein]-L-lysine = [E2 ubiquitin-conjugating enzyme]-L-cysteine + N(6)-ubiquitinyl-[acceptor protein]-L-lysine.. Its pathway is protein modification; protein ubiquitination. Probable E3 ubiquitin-protein ligase. The sequence is that of Probable E3 ubiquitin-protein ligase ZFP1 from Oryza sativa subsp. japonica (Rice).